A 677-amino-acid chain; its full sequence is Methionine--tRNA ligase (677 aa).

Positions 15 to 25 match the 'HIGH' region motif; the sequence is PYANGSIHLGH. Cys-146, Cys-149, Cys-159, and Cys-162 together coordinate Zn(2+). A 'KMSKS' region motif is present at residues 333-337; sequence KMSKS. Position 336 (Lys-336) interacts with ATP. One can recognise a tRNA-binding domain in the interval 575–677; sequence DFAKIDLRVA…DGAKPGQQVK (103 aa).

Belongs to the class-I aminoacyl-tRNA synthetase family. MetG type 1 subfamily. As to quaternary structure, homodimer. The cofactor is Zn(2+).

Its subcellular location is the cytoplasm. The catalysed reaction is tRNA(Met) + L-methionine + ATP = L-methionyl-tRNA(Met) + AMP + diphosphate. In terms of biological role, is required not only for elongation of protein synthesis but also for the initiation of all mRNA translation through initiator tRNA(fMet) aminoacylation. The chain is Methionine--tRNA ligase from Salmonella paratyphi C (strain RKS4594).